The sequence spans 477 residues: Homeobox protein Meis2 (477 aa).

The tract at residues 71-191 is required for interaction with PBX1; that stretch reads DALKRDKDAI…KMPIDLVIDE (121 aa). Residues 110–193 enclose the MEIS N-terminal domain; sequence GGDVCSSDSF…PIDLVIDERD (84 aa). Positions 193–203 are enriched in basic and acidic residues; sequence DGSSKSDHEEL. The tract at residues 193–283 is disordered; sequence DGSSKSDHEE…KKRQKKRGIF (91 aa). Composition is skewed to polar residues over residues 204–217 and 239–251; these read SGSSTNLADHNPSS and GHASQSGDNSSEQ. A DNA-binding region (homeobox; TALE-type) is located at residues 276–338; the sequence is RQKKRGIFPK…NARRRIVQPM (63 aa). An interaction with DNA region spans residues 299–333; it reads LTHPYPSEEQKKQLAQDTGLTILQVNNWFINARRR. Positions 340–477 are transcriptional activation domain; the sequence is DQSNRAGFLL…GGQVMDIHAQ (138 aa).

The protein belongs to the TALE/MEIS homeobox family. As to quaternary structure, monomer and homodimer. Heterodimer with HOXB13. Isoform Meis2A interacts with TLX1. Isoform Meis2B interacts with HOXA13 and PBX1 isoform PBX1b. Isoform Meis2D interacts with SP1, SP3 and KLF4. Isoform Meis2D interacts with PBX1 isoform PBX1a; the interaction partially relieves MEIS2 autoinhibition. Isoform Meis2B is part of a PDX1:PBX1b:MEIS2b complex; Meis2B is recruited by PBX1b and can be replaced by isoform Meis2D in a small fraction of complexes. Can form trimeric complexes including HOXB8 and PBX2 or PBX3. Displays spatially restricted expression patterns in the developing nervous system, limbs, face, and in various viscera. In adult, it is mainly expressed in the brain and female genital tract, with a different distribution of the alternative splice forms in these organs. Lower expression in lung and only basal level in heart, liver, kidney, spleen, and testis. Expressed in pancreatic islets (beta-cells only).

The protein localises to the nucleus. Its subcellular location is the cytoplasm. It localises to the perinuclear region. Its function is as follows. Involved in transcriptional regulation. Binds to HOX or PBX proteins to form dimers, or to a DNA-bound dimer of PBX and HOX proteins and thought to have a role in stabilization of the homeoprotein-DNA complex. Isoform Meis2B is required for the activity of a PDX1:PBX1b:MEIS2b complex in pancreatic acinar cells involved in the transcriptional activation of the ELA1 enhancer; the complex binds to the enhancer B element and cooperates with the transcription factor 1 complex (PTF1) bound to the enhancer A element; MEIS2 is not involved in complex DNA-binding. Probably in complex with PBX1, is involved in transcriptional regulation by KLF4. Isoforms Meis2B and Meis2D can bind to a EPHA8 promoter sequence containing the DNA motif 5'-CGGTCA-3'; in cooperation with a PBX protein (such as PBX2) is proposed to be involved in the transcriptional activation of EPHA8 in the developing midbrain. May be involved in regulation of myeloid differentiation. Can bind to the DNA sequence 5'-TGACAG-3'in the activator ACT sequence of the D(1A) dopamine receptor (DRD1) promoter and activate DRD1 transcription. The sequence is that of Homeobox protein Meis2 (Meis2) from Mus musculus (Mouse).